The sequence spans 457 residues: Protein translocase subunit SecY (457 aa).

10 helical membrane-spanning segments follow: residues 17 to 37 (IFFT…PVPG), 75 to 95 (IALG…LVVF), 118 to 138 (TRLF…KFAL), 162 to 182 (WVFY…LMWV), 195 to 215 (ISLI…GSIF), 230 to 250 (IVSL…TVLI), 287 to 307 (VIPV…GQFL), 326 to 346 (VAYS…WTAT), 386 to 406 (LLGA…GRIL), and 412 to 432 (VSYF…LDTM).

The protein belongs to the SecY/SEC61-alpha family. As to quaternary structure, component of the Sec protein translocase complex. Heterotrimer consisting of SecY, SecE and SecG subunits. The heterotrimers can form oligomers, although 1 heterotrimer is thought to be able to translocate proteins. Interacts with the ribosome. Interacts with SecDF, and other proteins may be involved. Interacts with SecA.

It localises to the cell inner membrane. Functionally, the central subunit of the protein translocation channel SecYEG. Consists of two halves formed by TMs 1-5 and 6-10. These two domains form a lateral gate at the front which open onto the bilayer between TMs 2 and 7, and are clamped together by SecE at the back. The channel is closed by both a pore ring composed of hydrophobic SecY resides and a short helix (helix 2A) on the extracellular side of the membrane which forms a plug. The plug probably moves laterally to allow the channel to open. The ring and the pore may move independently. This chain is Protein translocase subunit SecY, found in Chlamydia trachomatis serovar D (strain ATCC VR-885 / DSM 19411 / UW-3/Cx).